The chain runs to 198 residues: MNFLAHLHLATLADSSLLGNLMADFVRGNPEGQYSADVVAGIRMHRRVDVLTDTHPLVIQARHLFSNSYRRVAPITLDIIWDHFLSLNWDKLVPTYSLPAFIHHARSQIEPHLYYTPEKFQELNAFLWRQNWLIRYADLAFIADVLKGMARRHPRLSALSGSFQDIEQHYADFDALFWQFYPYMMEKAENKDFYCLPQ.

This sequence belongs to the AcpH family.

It catalyses the reaction holo-[ACP] + H2O = apo-[ACP] + (R)-4'-phosphopantetheine + H(+). Functionally, converts holo-ACP to apo-ACP by hydrolytic cleavage of the phosphopantetheine prosthetic group from ACP. This Photorhabdus laumondii subsp. laumondii (strain DSM 15139 / CIP 105565 / TT01) (Photorhabdus luminescens subsp. laumondii) protein is Acyl carrier protein phosphodiesterase.